The following is a 518-amino-acid chain: DNA-binding protein D-ETS-4 (518 aa).

2 disordered regions span residues 74–113 and 152–172; these read SQPIQQQQQPTAPYTNPSSHQLIPPPAYPHSAYPSPQSSP and LPPSPPESNCETPSPRSSCGE. Positions 84 to 94 are enriched in polar residues; the sequence is TAPYTNPSSHQ. A compositionally biased stretch (low complexity) spans 102–113; that stretch reads PHSAYPSPQSSP. Polar residues predominate over residues 158–171; it reads ESNCETPSPRSSCG. A PNT domain is found at 258-344; it reads HAKREADAIC…AQLEIWKMAY (87 aa). The interval 393-426 is disordered; that stretch reads APLNGSTTSPPATNASNGGTATVKRPNGGRTGGG. Residues 396–412 are compositionally biased toward polar residues; it reads NGSTTSPPATNASNGGT. The ETS DNA-binding region spans 430–513; it reads IHLWQFLKEL…RSQRLVYQFC (84 aa).

It belongs to the ETS family. Transient high expression in pole cells during embryonic stages 8-11.

Its subcellular location is the nucleus. Its function is as follows. May have a role in germline development. In Drosophila melanogaster (Fruit fly), this protein is DNA-binding protein D-ETS-4 (Ets98B).